A 370-amino-acid polypeptide reads, in one-letter code: Aminomethyltransferase (370 aa).

This sequence belongs to the GcvT family. The glycine cleavage system is composed of four proteins: P, T, L and H.

The catalysed reaction is N(6)-[(R)-S(8)-aminomethyldihydrolipoyl]-L-lysyl-[protein] + (6S)-5,6,7,8-tetrahydrofolate = N(6)-[(R)-dihydrolipoyl]-L-lysyl-[protein] + (6R)-5,10-methylene-5,6,7,8-tetrahydrofolate + NH4(+). In terms of biological role, the glycine cleavage system catalyzes the degradation of glycine. In Prochlorococcus marinus (strain AS9601), this protein is Aminomethyltransferase.